Reading from the N-terminus, the 446-residue chain is Regulator of drug sensitivity 2 (446 aa).

The segment at residues 15–45 is a DNA-binding region (zn(2)-C6 fungal-type); sequence KTCLFCKRSHVVCDKQRPCSRCVKRDIAHLC. Disordered regions lie at residues 52–106 and 158–218; these read VPNE…PKLD and ASNV…KEES. Polar residues-rich tracts occupy residues 56 to 70 and 84 to 96; these read MPSQ…NNIQ and DYQN…SGST. Position 102 is a phosphoserine (serine 102). A compositionally biased stretch (polar residues) spans 160-177; the sequence is NVHLENGSQTTQSPLEYQ. Positions 178–192 are enriched in basic and acidic residues; the sequence is NDNRRDEIGVARQEN. Residues 193-206 are compositionally biased toward polar residues; that stretch reads RSPTIMSGSSNSIS. Over residues 207 to 218 the composition is skewed to basic and acidic residues; that stretch reads KGDKQDQEKEES. Threonine 231 is modified (phosphothreonine).

In terms of processing, phosphorylated by SNF1 in absence of glucose. The phosphorylation is required for induction of transcription of gluconeogenic genes.

It localises to the cytoplasm. It is found in the nucleus. Functionally, transcription factor which regulates the expression of genes for gluconeogenesis, the TCA cycle, and glucose metabolism. Involved in the cell wall remodeling process and drug resistance. The sequence is that of Regulator of drug sensitivity 2 (RDS2) from Saccharomyces cerevisiae (strain ATCC 204508 / S288c) (Baker's yeast).